Reading from the N-terminus, the 499-residue chain is UDP-N-acetylmuramoyl-L-alanyl-D-glutamate--2,6-diaminopimelate ligase (499 aa).

Ser-32 provides a ligand contact to UDP-N-acetyl-alpha-D-muramoyl-L-alanyl-D-glutamate. An ATP-binding site is contributed by 117-123 (GTNGKTT). UDP-N-acetyl-alpha-D-muramoyl-L-alanyl-D-glutamate-binding positions include 159–160 (TT), Ser-186, Gln-192, and Arg-194. N6-carboxylysine is present on Lys-226. Meso-2,6-diaminopimelate is bound by residues Arg-394, 418–421 (DNPR), Gly-469, and Glu-473. The short motif at 418–421 (DNPR) is the Meso-diaminopimelate recognition motif element.

This sequence belongs to the MurCDEF family. MurE subfamily. Mg(2+) serves as cofactor. In terms of processing, carboxylation is probably crucial for Mg(2+) binding and, consequently, for the gamma-phosphate positioning of ATP.

Its subcellular location is the cytoplasm. The catalysed reaction is UDP-N-acetyl-alpha-D-muramoyl-L-alanyl-D-glutamate + meso-2,6-diaminopimelate + ATP = UDP-N-acetyl-alpha-D-muramoyl-L-alanyl-gamma-D-glutamyl-meso-2,6-diaminopimelate + ADP + phosphate + H(+). It functions in the pathway cell wall biogenesis; peptidoglycan biosynthesis. In terms of biological role, catalyzes the addition of meso-diaminopimelic acid to the nucleotide precursor UDP-N-acetylmuramoyl-L-alanyl-D-glutamate (UMAG) in the biosynthesis of bacterial cell-wall peptidoglycan. The polypeptide is UDP-N-acetylmuramoyl-L-alanyl-D-glutamate--2,6-diaminopimelate ligase (Synechococcus sp. (strain WH7803)).